Reading from the N-terminus, the 612-residue chain is uncharacterized protein (612 aa).

Residues Ala-213–Arg-238 are disordered. Residues Asp-421–Leu-610 enclose the VWFA domain.

It localises to the cytoplasm. In terms of biological role, component of the anaerobic respiratory chain that transforms nitrate to dinitrogen (denitrification). Function unknown, but essential for the denitrification process. This is an uncharacterized protein from Pseudomonas aeruginosa (strain ATCC 15692 / DSM 22644 / CIP 104116 / JCM 14847 / LMG 12228 / 1C / PRS 101 / PAO1).